We begin with the raw amino-acid sequence, 283 residues long: Diaminopimelate epimerase (283 aa).

N13, Q45, and N65 together coordinate substrate. The active-site Proton donor is the C74. Residues 75-76 (GN), N156, N190, and 208-209 (ER) each bind substrate. The Proton acceptor role is filled by C217. 218 to 219 (GS) lines the substrate pocket.

It belongs to the diaminopimelate epimerase family. In terms of assembly, homodimer.

It is found in the cytoplasm. The enzyme catalyses (2S,6S)-2,6-diaminopimelate = meso-2,6-diaminopimelate. Its pathway is amino-acid biosynthesis; L-lysine biosynthesis via DAP pathway; DL-2,6-diaminopimelate from LL-2,6-diaminopimelate: step 1/1. In terms of biological role, catalyzes the stereoinversion of LL-2,6-diaminopimelate (L,L-DAP) to meso-diaminopimelate (meso-DAP), a precursor of L-lysine and an essential component of the bacterial peptidoglycan. The chain is Diaminopimelate epimerase from Bartonella tribocorum (strain CIP 105476 / IBS 506).